The chain runs to 726 residues: Replication restart protein PriA (726 aa).

I234 is a binding site for ATP. Positions 234–373 (IQSVLYKGVQ…LHRKCFYIKL (140 aa)) constitute a Helicase ATP-binding domain. Residues 316-319 (LEEH) carry the DEAH box motif. Zn(2+)-binding residues include C431, C434, C440, C443, C458, C461, C471, and C474.

This sequence belongs to the helicase family. PriA subfamily. As to quaternary structure, component of the replication restart primosome. Zn(2+) serves as cofactor.

The catalysed reaction is Couples ATP hydrolysis with the unwinding of duplex DNA by translocating in the 3'-5' direction.. The enzyme catalyses ATP + H2O = ADP + phosphate + H(+). Functionally, initiates the restart of stalled replication forks, which reloads the replicative helicase on sites other than the origin of replication. Recognizes and binds to abandoned replication forks and remodels them to uncover a helicase loading site. Promotes assembly of the primosome at these replication forks. This is Replication restart protein PriA from Buchnera aphidicola subsp. Acyrthosiphon pisum (strain APS) (Acyrthosiphon pisum symbiotic bacterium).